A 217-amino-acid chain; its full sequence is LexA repressor (217 aa).

A DNA-binding region (H-T-H motif) is located at residues 26–46; the sequence is FEEMKLALDLKSKSGIHRLIK. Active-site for autocatalytic cleavage activity residues include serine 138 and lysine 176.

It belongs to the peptidase S24 family. Homodimer.

The catalysed reaction is Hydrolysis of Ala-|-Gly bond in repressor LexA.. Represses a number of genes involved in the response to DNA damage (SOS response), including recA and lexA. In the presence of single-stranded DNA, RecA interacts with LexA causing an autocatalytic cleavage which disrupts the DNA-binding part of LexA, leading to derepression of the SOS regulon and eventually DNA repair. The polypeptide is LexA repressor (Zymomonas mobilis subsp. mobilis (strain ATCC 31821 / ZM4 / CP4)).